A 93-amino-acid chain; its full sequence is CRISPR-associated endoribonuclease Cas2 2 (93 aa).

Residue D9 participates in Mg(2+) binding.

It belongs to the CRISPR-associated endoribonuclease Cas2 protein family. As to quaternary structure, homodimer, forms a heterotetramer with a Cas1 homodimer. It depends on Mg(2+) as a cofactor.

Functionally, CRISPR (clustered regularly interspaced short palindromic repeat), is an adaptive immune system that provides protection against mobile genetic elements (viruses, transposable elements and conjugative plasmids). CRISPR clusters contain sequences complementary to antecedent mobile elements and target invading nucleic acids. CRISPR clusters are transcribed and processed into CRISPR RNA (crRNA). Functions as a ssRNA-specific endoribonuclease. Involved in the integration of spacer DNA into the CRISPR cassette. The protein is CRISPR-associated endoribonuclease Cas2 2 of Synechocystis sp. (strain ATCC 27184 / PCC 6803 / Kazusa).